We begin with the raw amino-acid sequence, 398 residues long: Elongation factor Tu (398 aa).

In terms of domain architecture, tr-type G spans 10 to 207 (KIHLNVGTIG…ILDKNIPVPN (198 aa)). A G1 region spans residues 19 to 26 (GHVDHGKT). Position 19–26 (19–26 (GHVDHGKT)) interacts with GTP. Thr26 lines the Mg(2+) pocket. Residues 60-64 (GITIS) are G2. The interval 81–84 (DCPG) is G3. GTP is bound by residues 81–85 (DCPGH) and 136–139 (NKAD). The G4 stretch occupies residues 136 to 139 (NKAD). Residues 174–176 (SAL) form a G5 region.

This sequence belongs to the TRAFAC class translation factor GTPase superfamily. Classic translation factor GTPase family. EF-Tu/EF-1A subfamily. Monomer.

The protein localises to the cytoplasm. The catalysed reaction is GTP + H2O = GDP + phosphate + H(+). In terms of biological role, GTP hydrolase that promotes the GTP-dependent binding of aminoacyl-tRNA to the A-site of ribosomes during protein biosynthesis. The protein is Elongation factor Tu of Carsonella ruddii (strain PV).